We begin with the raw amino-acid sequence, 81 residues long: Photosystem I iron-sulfur center (81 aa).

2 4Fe-4S ferredoxin-type domains span residues Ser-2–Trp-31 and Ile-39–Tyr-68. The [4Fe-4S] cluster site is built by Cys-11, Cys-14, Cys-17, Cys-21, Cys-48, Cys-51, Cys-54, and Cys-58.

As to quaternary structure, the eukaryotic PSI reaction center is composed of at least 11 subunits. The cofactor is [4Fe-4S] cluster.

It is found in the plastid. The protein resides in the chloroplast thylakoid membrane. The catalysed reaction is reduced [plastocyanin] + hnu + oxidized [2Fe-2S]-[ferredoxin] = oxidized [plastocyanin] + reduced [2Fe-2S]-[ferredoxin]. Functionally, apoprotein for the two 4Fe-4S centers FA and FB of photosystem I (PSI); essential for photochemical activity. FB is the terminal electron acceptor of PSI, donating electrons to ferredoxin. The C-terminus interacts with PsaA/B/D and helps assemble the protein into the PSI complex. Required for binding of PsaD and PsaE to PSI. PSI is a plastocyanin-ferredoxin oxidoreductase, converting photonic excitation into a charge separation, which transfers an electron from the donor P700 chlorophyll pair to the spectroscopically characterized acceptors A0, A1, FX, FA and FB in turn. This Chloranthus spicatus (Chulantree) protein is Photosystem I iron-sulfur center.